Consider the following 94-residue polypeptide: Co-chaperonin GroES (94 aa).

This sequence belongs to the GroES chaperonin family. As to quaternary structure, heptamer of 7 subunits arranged in a ring. Interacts with the chaperonin GroEL.

It localises to the cytoplasm. Together with the chaperonin GroEL, plays an essential role in assisting protein folding. The GroEL-GroES system forms a nano-cage that allows encapsulation of the non-native substrate proteins and provides a physical environment optimized to promote and accelerate protein folding. GroES binds to the apical surface of the GroEL ring, thereby capping the opening of the GroEL channel. In Bacillus cytotoxicus (strain DSM 22905 / CIP 110041 / 391-98 / NVH 391-98), this protein is Co-chaperonin GroES.